A 481-amino-acid polypeptide reads, in one-letter code: Glutamate mutase epsilon subunit (481 aa).

Position 67 (arginine 67) interacts with L-glutamate. Residue glycine 69 participates in adenosylcob(III)alamin binding. Arginine 99 lines the L-glutamate pocket. Residue asparagine 122 participates in adenosylcob(III)alamin binding. L-glutamate is bound by residues 148-149 (RH), glutamate 170, and tyrosine 176. Adenosylcob(III)alamin is bound at residue proline 179. Residue tyrosine 180 participates in L-glutamate binding. Residues phenylalanine 296, lysine 325, glutamate 329, and isoleucine 333 each coordinate adenosylcob(III)alamin.

The protein belongs to the methylaspartate mutase GlmE subunit family. As to quaternary structure, heterotetramer composed of 2 epsilon subunits (GlmE) and 2 sigma subunits (GlmS). GlmE exists as a homodimer and GlmS as a monomer. Requires adenosylcob(III)alamin as cofactor.

It carries out the reaction (2S,3S)-3-methyl-L-aspartate = L-glutamate. It participates in amino-acid degradation; L-glutamate degradation via mesaconate pathway; acetate and pyruvate from L-glutamate: step 1/4. In terms of biological role, catalyzes the carbon skeleton rearrangement of L-glutamate to L-threo-3-methylaspartate ((2S,3S)-3-methylaspartate). The protein is Glutamate mutase epsilon subunit of Escherichia coli O157:H7.